A 294-amino-acid polypeptide reads, in one-letter code: 4-hydroxy-tetrahydrodipicolinate synthase (294 aa).

A pyruvate-binding site is contributed by T47. Y136 functions as the Proton donor/acceptor in the catalytic mechanism. K164 acts as the Schiff-base intermediate with substrate in catalysis. V206 contributes to the pyruvate binding site.

It belongs to the DapA family. In terms of assembly, homotetramer; dimer of dimers.

It localises to the cytoplasm. The enzyme catalyses L-aspartate 4-semialdehyde + pyruvate = (2S,4S)-4-hydroxy-2,3,4,5-tetrahydrodipicolinate + H2O + H(+). The protein operates within amino-acid biosynthesis; L-lysine biosynthesis via DAP pathway; (S)-tetrahydrodipicolinate from L-aspartate: step 3/4. Its function is as follows. Catalyzes the condensation of (S)-aspartate-beta-semialdehyde [(S)-ASA] and pyruvate to 4-hydroxy-tetrahydrodipicolinate (HTPA). The polypeptide is 4-hydroxy-tetrahydrodipicolinate synthase (Acaryochloris marina (strain MBIC 11017)).